Consider the following 887-residue polypeptide: Probable LRR receptor-like serine/threonine-protein kinase At5g59680 (887 aa).

The signal sequence occupies residues 1–23 (MERSLELLLLLIRTLAIIHISQA). Residues 25–510 (SQQGFISLDC…TKSGKSFPVT (486 aa)) are Extracellular-facing. Residues N143, N230, N256, N289, N338, N363, N400, N416, N432, N445, N464, and N471 are each glycosylated (N-linked (GlcNAc...) asparagine). LRR repeat units follow at residues 411-434 (RITT…QNLT), 435-457 (TLEK…LSNM), and 459-481 (SLLV…LQRK). The helical transmembrane segment at 511–531 (IVASVGSAAILIVVLVLVLFL) threads the bilayer. The Cytoplasmic segment spans residues 532 to 887 (RKKKPSAVEV…FDAEMIPRAR (356 aa)). T571 is modified (phosphothreonine). Residues 580–853 (NNFGRVVGEG…HVVIELKECL (274 aa)) enclose the Protein kinase domain. ATP is bound by residues 586-594 (VGEGGFGVV) and K608. Y653 is modified (phosphotyrosine). D705 functions as the Proton acceptor in the catalytic mechanism. S739 bears the Phosphoserine mark. Phosphothreonine occurs at positions 740 and 745. Phosphotyrosine is present on Y753.

Belongs to the protein kinase superfamily. Ser/Thr protein kinase family.

It localises to the membrane. The enzyme catalyses L-seryl-[protein] + ATP = O-phospho-L-seryl-[protein] + ADP + H(+). The catalysed reaction is L-threonyl-[protein] + ATP = O-phospho-L-threonyl-[protein] + ADP + H(+). This Arabidopsis thaliana (Mouse-ear cress) protein is Probable LRR receptor-like serine/threonine-protein kinase At5g59680.